A 121-amino-acid polypeptide reads, in one-letter code: Large ribosomal subunit protein bL20 (121 aa).

The protein belongs to the bacterial ribosomal protein bL20 family.

Binds directly to 23S ribosomal RNA and is necessary for the in vitro assembly process of the 50S ribosomal subunit. It is not involved in the protein synthesizing functions of that subunit. This is Large ribosomal subunit protein bL20 from Wolbachia pipientis subsp. Culex pipiens (strain wPip).